The primary structure comprises 122 residues: Large ribosomal subunit protein uL14 (122 aa).

It belongs to the universal ribosomal protein uL14 family. Part of the 50S ribosomal subunit. Forms a cluster with proteins L3 and L19. In the 70S ribosome, L14 and L19 interact and together make contacts with the 16S rRNA in bridges B5 and B8.

In terms of biological role, binds to 23S rRNA. Forms part of two intersubunit bridges in the 70S ribosome. This Coxiella burnetii (strain RSA 331 / Henzerling II) protein is Large ribosomal subunit protein uL14.